We begin with the raw amino-acid sequence, 644 residues long: Exoribonuclease 2 (644 aa).

Residues 189–516 (REDLTALDFV…NHRLLKAVIK (328 aa)) form the RNB domain. Residues 561–643 (DTRFAAEIVD…ETRSIIARPV (83 aa)) form the S1 motif domain.

It belongs to the RNR ribonuclease family. RNase II subfamily.

It localises to the cytoplasm. The enzyme catalyses Exonucleolytic cleavage in the 3'- to 5'-direction to yield nucleoside 5'-phosphates.. Its function is as follows. Involved in mRNA degradation. Hydrolyzes single-stranded polyribonucleotides processively in the 3' to 5' direction. The polypeptide is Exoribonuclease 2 (Escherichia coli O45:K1 (strain S88 / ExPEC)).